The chain runs to 423 residues: Putative serpin-Z12 (423 aa).

Residues 1-25 (MAALAAGEPFSGRATGGDGGVRSDV) form a disordered region. The segment at 370–394 (GTVAAASTAVVMMQKGSSLPPVDFV) is RCL.

It belongs to the serpin family.

In terms of biological role, probable serine protease inhibitor. The chain is Putative serpin-Z12 from Oryza sativa subsp. japonica (Rice).